A 126-amino-acid polypeptide reads, in one-letter code: RutC family protein PH0854 (126 aa).

Belongs to the RutC family.

This chain is RutC family protein PH0854, found in Pyrococcus horikoshii (strain ATCC 700860 / DSM 12428 / JCM 9974 / NBRC 100139 / OT-3).